Reading from the N-terminus, the 51-residue chain is ATP synthase protein 8 (51 aa).

The helical transmembrane segment at 7–27 (LNWAMMTIMFSLSLLVSMIIL) threads the bilayer.

This sequence belongs to the ATPase protein 8 family. In terms of assembly, F-type ATPases have 2 components, CF(1) - the catalytic core - and CF(0) - the membrane proton channel.

Its subcellular location is the mitochondrion membrane. Functionally, mitochondrial membrane ATP synthase (F(1)F(0) ATP synthase or Complex V) produces ATP from ADP in the presence of a proton gradient across the membrane which is generated by electron transport complexes of the respiratory chain. F-type ATPases consist of two structural domains, F(1) - containing the extramembraneous catalytic core and F(0) - containing the membrane proton channel, linked together by a central stalk and a peripheral stalk. During catalysis, ATP synthesis in the catalytic domain of F(1) is coupled via a rotary mechanism of the central stalk subunits to proton translocation. Part of the complex F(0) domain. Minor subunit located with subunit a in the membrane. In Limulus polyphemus (Atlantic horseshoe crab), this protein is ATP synthase protein 8 (MT-ATP8).